Here is a 311-residue protein sequence, read N- to C-terminus: S-adenosyl-L-methionine-dependent tRNA 4-demethylwyosine synthase (311 aa).

Positions 26, 39, 52, 62, 66, and 69 each coordinate [4Fe-4S] cluster. Residues Tyr45–Asn283 form the Radical SAM core domain.

This sequence belongs to the TYW1 family. Monomer. It depends on [4Fe-4S] cluster as a cofactor.

The protein resides in the cytoplasm. It catalyses the reaction N(1)-methylguanosine(37) in tRNA(Phe) + pyruvate + S-adenosyl-L-methionine = 4-demethylwyosine(37) in tRNA(Phe) + 5'-deoxyadenosine + L-methionine + CO2 + H2O. In terms of biological role, component of the wyosine derivatives biosynthesis pathway that catalyzes the condensation of N-methylguanine with 2 carbon atoms from pyruvate to form the tricyclic 4-demethylwyosine (imG-14) on guanosine-37 of tRNA(Phe). In Methanocaldococcus jannaschii (strain ATCC 43067 / DSM 2661 / JAL-1 / JCM 10045 / NBRC 100440) (Methanococcus jannaschii), this protein is S-adenosyl-L-methionine-dependent tRNA 4-demethylwyosine synthase.